A 75-amino-acid chain; its full sequence is RNA-binding protein KhpA (75 aa).

The region spanning 29-75 (KVVYHLTVHPDDVGKVIGKNGRIAKAIRTVVYASKTDGNKRIYLDIM) is the KH domain.

Belongs to the KhpA RNA-binding protein family. Forms a complex with KhpB.

The protein localises to the cytoplasm. Its function is as follows. A probable RNA chaperone. Forms a complex with KhpB which binds to cellular RNA and controls its expression. Plays a role in peptidoglycan (PG) homeostasis and cell length regulation. The protein is RNA-binding protein KhpA of Oceanobacillus iheyensis (strain DSM 14371 / CIP 107618 / JCM 11309 / KCTC 3954 / HTE831).